The following is a 391-amino-acid chain: Matrix metalloproteinase-23 (391 aa).

Residues 1 to 19 (MGWRACLRPEASGAVQGRW) lie on the Cytoplasmic side of the membrane. Positions 1–79 (MGWRACLRPE…LSMLVTRRRR (79 aa)) are excised as a propeptide. The helical; Signal-anchor for type II membrane protein transmembrane segment at 20-38 (LGAVLSGLCLLSALAFLEW) threads the bilayer. Residues 39 to 391 (LGSPTETAWN…TYSWRVRVRS (353 aa)) are Lumenal-facing. N-linked (GlcNAc...) asparagine glycosylation is found at N93 and N149. H212 provides a ligand contact to Zn(2+). E213 is an active-site residue. Residues H216 and H222 each coordinate Zn(2+). N-linked (GlcNAc...) asparagine glycosylation occurs at N233. The ShKT domain occupies 256–290 (CLDRIFVCTSWARKGFCDVRQRLMKRLCPRSCDFC). Cystine bridges form between C256/C290, C263/C283, and C272/C287. The 86-residue stretch at 296-381 (PTVATTTSPT…VVRHRQRVLT (86 aa)) folds into the Ig-like C2-type domain. N-linked (GlcNAc...) asparagine glycosylation occurs at N317. Residues C322 and C371 are joined by a disulfide bond.

The protein belongs to the peptidase M10A family. It depends on Zn(2+) as a cofactor. Post-translationally, N-glycosylated. In terms of processing, proteolytic cleavage might yield an active form. Expressed at the highest levels in ovary and uterus. In ovary expression is strictly confined to granulosa cells of preantral and small antral follicles. Detected also in testis and prostate.

The protein localises to the membrane. It is found in the endoplasmic reticulum membrane. Inhibited by TIMP2. Its function is as follows. Protease. May regulate the surface expression of some potassium channels by retaining them in the endoplasmic reticulum. The polypeptide is Matrix metalloproteinase-23 (Mmp23) (Rattus norvegicus (Rat)).